Consider the following 360-residue polypeptide: GTPase Obg (360 aa).

The Obg domain occupies 1 to 156; sequence MFVDSVEIII…KCVRLELKLI (156 aa). An OBG-type G domain is found at 157-360; that stretch reads ADIGLVGFPN…LKFVLLEALP (204 aa). GTP contacts are provided by residues 163-170, 188-192, 210-213, 279-282, and 341-343; these read GFPNAGKS, FTTLV, DIPG, NKCD, and SAV. Ser170 and Thr190 together coordinate Mg(2+).

It belongs to the TRAFAC class OBG-HflX-like GTPase superfamily. OBG GTPase family. Monomer. It depends on Mg(2+) as a cofactor.

The protein resides in the cytoplasm. An essential GTPase which binds GTP, GDP and possibly (p)ppGpp with moderate affinity, with high nucleotide exchange rates and a fairly low GTP hydrolysis rate. Plays a role in control of the cell cycle, stress response, ribosome biogenesis and in those bacteria that undergo differentiation, in morphogenesis control. The sequence is that of GTPase Obg from Helicobacter pylori (strain ATCC 700392 / 26695) (Campylobacter pylori).